A 651-amino-acid polypeptide reads, in one-letter code: MADVLSRFNSGKLWDFKGGIHPPEMKSQSNSQPLRHLPLGTDFYIPLKQHLGTTGNLLIKEGDYVLKGQALTKGDGLRMLPVHAPTSGTIKSIKPYVATHPSGLDEPTIHLQSDGLDQWIERNPIDDFSTLSPEQLIHKIYQAGIAGLGGAVFPTAAKIQSAEQKVKLLIINGAECEPYITCDDRLMRERADEIIKGIRILRYILHPEKVVIAIEDNKPEAISAIRNALQGANDISVRVIPTKYPSGATKQLIYLLTGIEVPSGERSSSIGVLMQNVGTMFAIKRAVINDEPLIERVVTLTGNKIAEKGNYWVRLGTPISQILSDAGYQFDKHFPIFAGGPMMGLELPNLNAPVTKLVNCLLAPDYLEYAEPEAEQACIRCSSCSDACPVNLMPQQLYWFARSEDHKKSEEYALKDCIECGICAYVCPSHIPLIQYFRQEKAKIWQIKEKQKKSDEAKIRFEAKQARMEREEQERKARSQRAAQARREELAQTKGEDPVKAALERLKAKKANETESTQIKTLTSEKGEVLPDNTDLMAQRKARRLARQQAASQVENQEQQTQPTDAKKAVVAAAIARAKAKKLAQANSTSEAISNSQTAENEVEKTKSAVEKTQENSTALDPKKAAVAAAIARAKAKKLAKTQTTLENNQE.

4Fe-4S ferredoxin-type domains lie at 368-398 and 408-437; these read EYAEPEAEQACIRCSSCSDACPVNLMPQQLY and KSEEYALKDCIECGICAYVCPSHIPLIQYF. Cysteine 378, cysteine 381, cysteine 384, cysteine 388, cysteine 417, cysteine 420, cysteine 423, and cysteine 427 together coordinate [4Fe-4S] cluster. Basic and acidic residues-rich tracts occupy residues 465–477 and 485–513; these read QARMEREEQERKA and ARREELAQTKGEDPVKAALERLKAKKANE. Disordered regions lie at residues 465 to 565 and 583 to 624; these read QARM…QPTD and LAQA…DPKK. 2 stretches are compositionally biased toward polar residues: residues 554–564 and 587–600; these read VENQEQQTQPT and NSTSEAISNSQTAE. Positions 602-614 are enriched in basic and acidic residues; the sequence is EVEKTKSAVEKTQ.

The protein belongs to the 4Fe4S bacterial-type ferredoxin family. RnfC subfamily. In terms of assembly, the complex is composed of six subunits: RnfA, RnfB, RnfC, RnfD, RnfE and RnfG. The cofactor is [4Fe-4S] cluster.

It is found in the cell inner membrane. Its function is as follows. Part of a membrane-bound complex that couples electron transfer with translocation of ions across the membrane. In Haemophilus influenzae (strain PittEE), this protein is Ion-translocating oxidoreductase complex subunit C.